Consider the following 577-residue polypeptide: E3 ubiquitin-protein ligase MSL2 (577 aa).

The tract at residues 1 to 116 is sufficient for interaction with MSL1; that stretch reads MNPVNATALY…CEYITQTTLA (116 aa). Residues Cys-44, Cys-47, Cys-62, His-64, Cys-67, Cys-70, Cys-81, and Cys-84 each contribute to the Zn(2+) site. The RING-type zinc finger occupies 44-85; sequence CCVCGHLLQDPIAPTNSTCQHYVCKTCKGKKMMMKPSCSWCK. Residue Lys-375 forms a Glycyl lysine isopeptide (Lys-Gly) (interchain with G-Cter in SUMO2) linkage. The segment at 405–428 is disordered; that stretch reads TKSMKKSHEHGSKKSHSKSKPGIL. Positions 407 to 423 are enriched in basic residues; it reads SMKKSHEHGSKKSHSKS. A Phosphoserine modification is found at Ser-447. In terms of domain architecture, CXC MSL2-type spans 457–508; sequence QEKKGCKCGRATQNPSVLTCRGQRCPCYSNRKACLDCICRGCQNSYMANGEK. Zn(2+) is bound by residues Cys-462, Cys-464, Cys-476, Cys-481, Cys-483, Cys-490, Cys-493, Cys-495, and Cys-498.

This sequence belongs to the MSL2 family. As to quaternary structure, component of a multisubunit histone acetyltransferase complex (MSL) at least composed of the KAT8/MOF/MYST1, MSL1/hampin, MSL2 and MSL3. Forms a MSL heterotetrameric core with MSL1.

It localises to the nucleus. It is found in the chromosome. It catalyses the reaction S-ubiquitinyl-[E2 ubiquitin-conjugating enzyme]-L-cysteine + [acceptor protein]-L-lysine = [E2 ubiquitin-conjugating enzyme]-L-cysteine + N(6)-ubiquitinyl-[acceptor protein]-L-lysine.. Its pathway is protein modification; protein ubiquitination. Functionally, non-catalytic component of the MSL histone acetyltransferase complex, a multiprotein complex that mediates the majority of histone H4 acetylation at 'Lys-16' (H4K16ac), an epigenetic mark that prevents chromatin compaction. The MSL complex is required for chromosome stability and genome integrity by maintaining homeostatic levels of H4K16ac. The MSL complex is also involved in gene dosage by promoting up-regulation of genes expressed by the X chromosome. X up-regulation is required to compensate for autosomal biallelic expression. The MSL complex also participates in gene dosage compensation by promoting expression of Tsix non-coding RNA. MSL2 plays a key role in gene dosage by ensuring biallelic expression of a subset of dosage-sensitive genes, including many haploinsufficient genes. Acts by promoting promoter-enhancer contacts, thereby preventing DNA methylation of one allele and creating a methylation-free environment for methylation-sensitive transcription factors such as SP1, KANSL1 and KANSL3. Also acts as an E3 ubiquitin ligase that promotes monoubiquitination of histone H2B at 'Lys-35' (H2BK34Ub), but not that of H2A. This activity is greatly enhanced by heterodimerization with MSL1. H2B ubiquitination in turn stimulates histone H3 methylation at 'Lys-4' (H3K4me) and 'Lys-79' (H3K79me) and leads to gene activation, including that of HOXA9 and MEIS1. This chain is E3 ubiquitin-protein ligase MSL2, found in Mus musculus (Mouse).